The primary structure comprises 613 residues: MSKAKEGDYGSIKKVSGPVVVADNMGGSAMYELVRVGTGELIGEIIRLEGDTATIQVYEETSGLTVGDGVLRTKQPLSVDLGPGILGNIFDGIQRPLKAIADVSGDVFIPRGVNVPSLDQTKQWEFHPSSYRVGDRVTGGDIIGTVPENTLLDHKVMLIPQAKGTITYIAPAGNYNINERIIEVEFQGTKYEYCMKQSWPVRSPRPVVEKLLADTPLLTGQRVLDSLFPGVRGGTCAIPGAFGCGKTVISQALSKYSNSDGIVYVGCGERGNEMAEVLMDFPQLTMTMPDGREESIMKRTTLVANTSNMPVAAREASIYTGITLSEYFRDMGYNFAMMADSTSRWAEALREISGRLAEMPADSGYPAYLGARLASFYERSGRVACIGSPEREGSVTIVGAVSPPGGDFSDPVTSATLGIVQVFWGLDKKLAQRKHFPSVNWLISYSKYLNALEPFYEKFDNDFVDIRQVAREVLQKEDELNEIVQLVGKDALAESDKIILETADFLKEDYLAQNSFTKYDKYCPFYKSVGMMRNIVTFHRLATQAIERTATGNSDGQKLLSNIIKAKLGDLLYKVSSQKFEDPSDGESVVTGRLNELNDELKEKFRALEDEYS.

240-247 (GAFGCGKT) serves as a coordination point for ATP.

It belongs to the ATPase alpha/beta chains family. V-ATPase is a heteromultimeric enzyme composed of a peripheral catalytic V1 complex (main components: subunits A, B, C, D, E, and F) attached to an integral membrane V0 proton pore complex (main component: the proteolipid protein).

It carries out the reaction ATP + H2O + 4 H(+)(in) = ADP + phosphate + 5 H(+)(out). In terms of biological role, catalytic subunit of the peripheral V1 complex of vacuolar ATPase. V-ATPase vacuolar ATPase is responsible for acidifying a variety of intracellular compartments in eukaryotic cells. The sequence is that of V-type proton ATPase catalytic subunit A isoform 2 from Acetabularia acetabulum (Mermaid's wine glass).